Reading from the N-terminus, the 1188-residue chain is F-box only protein 38 (1188 aa).

An F-box domain is found at 30–75 (MNQLSHEVLCHIFRYLPLQDIMCMECLSRKLKEAVTLYLRVVRVVD). The interaction with KLF7 stretch occupies residues 59-119 (KLKEAVTLYL…LHPRYLERRR (61 aa)). 3 consecutive short sequence motifs (nuclear export signal) follow at residues 194-201 (LHLVGVNV), 307-316 (LEVDLGYLII), and 451-460 (LLPSLEFISL). Residues 487 to 526 (ALVSNQNSNNDDNNAQNNNANIHDNNHHHPDDSDEENDFR) form a disordered region. The segment covering 491-509 (NQNSNNDDNNAQNNNANIH) has biased composition (low complexity). Threonine 591 carries the post-translational modification Phosphothreonine. 3 positions are modified to phosphoserine: serine 598, serine 600, and serine 606. Disordered stretches follow at residues 620–666 (RRYS…FPLE), 685–766 (MKAA…MEEG), and 787–909 (RTSR…STSD). Composition is skewed to basic and acidic residues over residues 621-630 (RYSEREEKTG) and 685-699 (MKAA…KNKD). Polar residues predominate over residues 703–740 (SCSSTTASTVGNSSSHNTASQSPDFVRTVNSGGSSEPS). Phosphoserine is present on residues serine 736 and serine 740. The segment covering 787-798 (RTSRCSDEERPS) has biased composition (basic and acidic residues). The span at 849-861 (SSQPESCDVQSNE) shows a compositional bias: polar residues. Positions 889–900 (TKPRHAMKRKRT) are enriched in basic residues. A Nuclear localization signal motif is present at residues 896-899 (KRKR).

As to quaternary structure, part of the SCF (SKP1-CUL1-F-box) E3 ubiquitin-protein ligase complex SCF(FBXO38) composed of CUL1, SKP1, RBX1 and FBXO38. Interacts with KLF7. Interacts with PDCD1/PD-1.

The protein resides in the cytoplasm. Its subcellular location is the cytosol. The protein localises to the nucleus. Its pathway is protein modification; protein ubiquitination. Its function is as follows. Substrate recognition component of a SCF (SKP1-CUL1-F-box protein) E3 ubiquitin-protein ligase complex which mediates the ubiquitination and subsequent proteasomal degradation of PDCD1/PD-1, thereby regulating T-cells-mediated immunity. Required for anti-tumor activity of T-cells by promoting the degradation of PDCD1/PD-1; the PDCD1-mediated inhibitory pathway being exploited by tumors to attenuate anti-tumor immunity and facilitate tumor survival. May indirectly stimulate the activity of transcription factor KLF7, a regulator of neuronal differentiation, without promoting KLF7 ubiquitination. This chain is F-box only protein 38, found in Homo sapiens (Human).